The following is a 60-amino-acid chain: Large ribosomal subunit protein bL32 (60 aa).

The tract at residues methionine 1–phenylalanine 47 is disordered. Positions arginine 7–arginine 16 are enriched in basic residues.

The protein belongs to the bacterial ribosomal protein bL32 family.

In Teredinibacter turnerae (strain ATCC 39867 / T7901), this protein is Large ribosomal subunit protein bL32.